The chain runs to 1225 residues: Chromosome-associated kinesin KIF4 (1225 aa).

The Kinesin motor domain maps to 9–338; that stretch reads IPVRVVRCRP…LRYADRARKI (330 aa). 88-95 serves as a coordination point for ATP; the sequence is GQTGSGKT. The stretch at 352–1003 forms a coiled coil; it reads ELNHLKQQVQ…LKQKMLLVQV (652 aa). Disordered stretches follow at residues 498-520, 717-744, and 1006-1047; these read QDAAGEAETGQVTKRSSDDFTTQ, NKRLKDALQKQREAADKRKESQNRGMEG, and GQKL…PTPE. The span at 507–520 shows a compositional bias: polar residues; that stretch reads GQVTKRSSDDFTTQ. The segment covering 719-738 has biased composition (basic and acidic residues); sequence RLKDALQKQREAADKRKESQ. The interval 1004–1225 is globular; that stretch reads ASGQKLRRDQ…GCTPIKEEID (222 aa).

This sequence belongs to the TRAFAC class myosin-kinesin ATPase superfamily. Kinesin family. Chromokinesin subfamily. It depends on [2Fe-2S] cluster as a cofactor. The cofactor is [4Fe-4S] cluster. Expressed in proliferating cells; neuroepithelium of embryos.

The protein resides in the nucleus. It is found in the chromosome. It localises to the cytoplasm. Its subcellular location is the cytoskeleton. Functionally, iron-sulfur (Fe-S) cluster binding motor protein that has a role in chromosome segregation during mitosis. Required for mitotic chromosomal positioning and bipolar spindle stabilization. In Gallus gallus (Chicken), this protein is Chromosome-associated kinesin KIF4 (KIF4).